A 386-amino-acid polypeptide reads, in one-letter code: Microtubule-binding protein TANGLED1 (386 aa).

5 disordered regions span residues 83 to 105 (RMRGGASAQKRSPSGKFGGGVGG), 140 to 202 (AAGA…RVRS), 244 to 266 (HASTSAATDPCATPSPSKKQKRL), 303 to 330 (PARPAAVSPPPPVKAQASPAKTRRCSFS), and 345 to 386 (RLSL…ISSR). Residues 170–180 (RARRAREKQSH) are compositionally biased toward basic residues. A compositionally biased stretch (low complexity) spans 181 to 193 (RGGAATRGADAAT). A compositionally biased stretch (polar residues) spans 375–386 (TVRTVSSKISSR).

In terms of tissue distribution, expressed in vegetative shoot tips consisting of leaf primordia and the bases of immature leaves, the shoot apical meristem, and unexpanded stem tissue. Strongly expressed in tissues enriched in dividing cells: ear primordia and embryos.

Its subcellular location is the cytoplasm. The protein localises to the cytoskeleton. It is found in the spindle. The protein resides in the phragmoplast. In terms of biological role, is required for spatial control cell division during leaf development. Through an association with microtubules, acts both for the positioning of cytoskeletal arrays that establish planes of cell division during prophase and for spatial guidance of expanding phragmoplasts toward preestablished cortical division sites (CDS) during cytokinesis. In Zea mays (Maize), this protein is Microtubule-binding protein TANGLED1 (TAN1).